The primary structure comprises 274 residues: Shikimate dehydrogenase (NADP(+)) (274 aa).

Shikimate is bound by residues Ser15–Ser17 and Thr62. Catalysis depends on Lys66, which acts as the Proton acceptor. Asp78 provides a ligand contact to NADP(+). Shikimate is bound by residues Asn87 and Asp102. NADP(+) is bound by residues Gly127–Ala131 and Met215. Shikimate is bound at residue Tyr217. Gly239 is an NADP(+) binding site.

It belongs to the shikimate dehydrogenase family. As to quaternary structure, homodimer.

It carries out the reaction shikimate + NADP(+) = 3-dehydroshikimate + NADPH + H(+). It functions in the pathway metabolic intermediate biosynthesis; chorismate biosynthesis; chorismate from D-erythrose 4-phosphate and phosphoenolpyruvate: step 4/7. Its function is as follows. Involved in the biosynthesis of the chorismate, which leads to the biosynthesis of aromatic amino acids. Catalyzes the reversible NADPH linked reduction of 3-dehydroshikimate (DHSA) to yield shikimate (SA). The polypeptide is Shikimate dehydrogenase (NADP(+)) (Dechloromonas aromatica (strain RCB)).